Reading from the N-terminus, the 212-residue chain is Large ribosomal subunit protein uL3 (212 aa).

Basic residues predominate over residues arginine 128–threonine 146. Residues arginine 128 to proline 164 form a disordered region.

Belongs to the universal ribosomal protein uL3 family. As to quaternary structure, part of the 50S ribosomal subunit. Forms a cluster with proteins L14 and L19.

Functionally, one of the primary rRNA binding proteins, it binds directly near the 3'-end of the 23S rRNA, where it nucleates assembly of the 50S subunit. In Desulfitobacterium hafniense (strain Y51), this protein is Large ribosomal subunit protein uL3.